We begin with the raw amino-acid sequence, 334 residues long: Protein-methionine-sulfoxide reductase catalytic subunit MsrP (334 aa).

The tat-type signal signal peptide spans 1–44 (MKKNQFLKESDVTAESVFFMKRRQVLKALGISAAALSLPHAAHA). Residues Asn-88, 91–92 (YE), Cys-146, Thr-181, Asn-233, Arg-238, and 249–251 (GIK) contribute to the Mo-molybdopterin site.

Belongs to the MsrP family. As to quaternary structure, heterodimer of a catalytic subunit (MsrP) and a heme-binding subunit (MsrQ). The cofactor is Mo-molybdopterin. Predicted to be exported by the Tat system. The position of the signal peptide cleavage has not been experimentally proven.

It is found in the periplasm. It carries out the reaction L-methionyl-[protein] + a quinone + H2O = L-methionyl-(S)-S-oxide-[protein] + a quinol. The enzyme catalyses L-methionyl-[protein] + a quinone + H2O = L-methionyl-(R)-S-oxide-[protein] + a quinol. Part of the MsrPQ system that repairs oxidized periplasmic proteins containing methionine sulfoxide residues (Met-O), using respiratory chain electrons. Thus protects these proteins from oxidative-stress damage caused by reactive species of oxygen and chlorine generated by the host defense mechanisms. MsrPQ is essential for the maintenance of envelope integrity under bleach stress, rescuing a wide series of structurally unrelated periplasmic proteins from methionine oxidation, including the primary periplasmic chaperone SurA and the lipoprotein Pal. The catalytic subunit MsrP is non-stereospecific, being able to reduce both (R-) and (S-) diastereoisomers of methionine sulfoxide. The protein is Protein-methionine-sulfoxide reductase catalytic subunit MsrP of Escherichia coli O17:K52:H18 (strain UMN026 / ExPEC).